Here is a 330-residue protein sequence, read N- to C-terminus: Probable deoxyhypusine synthase (330 aa).

The active-site Nucleophile is Lys303.

It belongs to the deoxyhypusine synthase family. Requires NAD(+) as cofactor.

The enzyme catalyses [eIF5A protein]-L-lysine + spermidine = [eIF5A protein]-deoxyhypusine + propane-1,3-diamine. It functions in the pathway protein modification; eIF5A hypusination. Functionally, catalyzes the NAD-dependent oxidative cleavage of spermidine and the subsequent transfer of the butylamine moiety of spermidine to the epsilon-amino group of a specific lysine residue of the eIF-5A precursor protein to form the intermediate deoxyhypusine residue. This is Probable deoxyhypusine synthase (dys) from Methanocaldococcus jannaschii (strain ATCC 43067 / DSM 2661 / JAL-1 / JCM 10045 / NBRC 100440) (Methanococcus jannaschii).